The primary structure comprises 512 residues: GMP synthase [glutamine-hydrolyzing] (512 aa).

Residues 3–196 (NILILDFGSQ…VKHICQASET (194 aa)) form the Glutamine amidotransferase type-1 domain. Catalysis depends on Cys80, which acts as the Nucleophile. Catalysis depends on residues His169 and Glu171. The GMPS ATP-PPase domain occupies 197–387 (WKIETIEKQL…LGLPDVLISR (191 aa)). Residue 225–231 (SGGVDSS) coordinates ATP.

Homodimer.

It carries out the reaction XMP + L-glutamine + ATP + H2O = GMP + L-glutamate + AMP + diphosphate + 2 H(+). The protein operates within purine metabolism; GMP biosynthesis; GMP from XMP (L-Gln route): step 1/1. In terms of biological role, catalyzes the synthesis of GMP from XMP. The sequence is that of GMP synthase [glutamine-hydrolyzing] from Chlamydia caviae (strain ATCC VR-813 / DSM 19441 / 03DC25 / GPIC) (Chlamydophila caviae).